We begin with the raw amino-acid sequence, 327 residues long: Beta-ketoacyl-[acyl-carrier-protein] synthase III (327 aa).

Active-site residues include Cys112 and His253. The segment at 254 to 258 (QANER) is ACP-binding. Residue Asn283 is part of the active site.

Belongs to the thiolase-like superfamily. FabH family. Homodimer.

It localises to the cytoplasm. The enzyme catalyses malonyl-[ACP] + acetyl-CoA + H(+) = 3-oxobutanoyl-[ACP] + CO2 + CoA. It participates in lipid metabolism; fatty acid biosynthesis. Its function is as follows. Catalyzes the condensation reaction of fatty acid synthesis by the addition to an acyl acceptor of two carbons from malonyl-ACP. Catalyzes the first condensation reaction which initiates fatty acid synthesis and may therefore play a role in governing the total rate of fatty acid production. Possesses both acetoacetyl-ACP synthase and acetyl transacylase activities. Its substrate specificity determines the biosynthesis of branched-chain and/or straight-chain of fatty acids. The protein is Beta-ketoacyl-[acyl-carrier-protein] synthase III of Chlamydia muridarum (strain MoPn / Nigg).